A 186-amino-acid polypeptide reads, in one-letter code: Potassium-transporting ATPase KdpC subunit (186 aa).

Residues Leu10–Gly30 traverse the membrane as a helical segment.

This sequence belongs to the KdpC family. The system is composed of three essential subunits: KdpA, KdpB and KdpC.

It is found in the cell membrane. Its function is as follows. Part of the high-affinity ATP-driven potassium transport (or Kdp) system, which catalyzes the hydrolysis of ATP coupled with the electrogenic transport of potassium into the cytoplasm. This subunit acts as a catalytic chaperone that increases the ATP-binding affinity of the ATP-hydrolyzing subunit KdpB by the formation of a transient KdpB/KdpC/ATP ternary complex. This is Potassium-transporting ATPase KdpC subunit from Staphylococcus aureus (strain bovine RF122 / ET3-1).